We begin with the raw amino-acid sequence, 362 residues long: MFEKGYVDENYVRIPKDELFSFVVRVLTKLGTPEEDAKIVADNLIMADLRGIESHGVQRLKRYVDGILSGGINLHPRIKIIREGPSYALLDGDEGFGQVVGYKAMKLAIEKARKTGIGIVAVRNSNHYGIAGYYALMAAEEGMIGISMTNSRPLVAPTGGVERILGTNPIALAAPTKGKPFLLDMATSVVPIGKLEVYRRKGEEIPEGWAINSKGEITRSVEEVFNGGSLLPLGGFGELLGGHKGYGLSLMVDILSGILSGGTWSKHVKNTNEKNSNVCHFFMAINIEHFTPLEEFKGRMSEMINEIKNSRKHPDFERIWIHGEKGFLTMETRLKLGIPIYKKVLDELNEIARRVGVKGLEV.

Belongs to the LDH2/MDH2 oxidoreductase family. In terms of assembly, homodimer.

The protein resides in the cytoplasm. The enzyme catalyses (S)-malate + NAD(+) = oxaloacetate + NADH + H(+). This is Malate dehydrogenase (mdh) from Pyrococcus abyssi (strain GE5 / Orsay).